The primary structure comprises 369 residues: Histidinol-phosphate aminotransferase 2 (369 aa).

K227 carries the N6-(pyridoxal phosphate)lysine modification.

Belongs to the class-II pyridoxal-phosphate-dependent aminotransferase family. Histidinol-phosphate aminotransferase subfamily. In terms of assembly, homodimer. The cofactor is pyridoxal 5'-phosphate.

The catalysed reaction is L-histidinol phosphate + 2-oxoglutarate = 3-(imidazol-4-yl)-2-oxopropyl phosphate + L-glutamate. It functions in the pathway amino-acid biosynthesis; L-histidine biosynthesis; L-histidine from 5-phospho-alpha-D-ribose 1-diphosphate: step 7/9. The chain is Histidinol-phosphate aminotransferase 2 (hisC2) from Mesorhizobium japonicum (strain LMG 29417 / CECT 9101 / MAFF 303099) (Mesorhizobium loti (strain MAFF 303099)).